Reading from the N-terminus, the 1101-residue chain is Isoleucine--tRNA ligase (1101 aa).

A 'HIGH' region motif is present at residues 50 to 60 (PFANGLPHYGH). The 'KMSKS' region signature appears at 629 to 633 (KLSKR). An ATP-binding site is contributed by K632.

It belongs to the class-I aminoacyl-tRNA synthetase family. IleS type 2 subfamily. As to quaternary structure, monomer. It depends on Zn(2+) as a cofactor.

The protein resides in the cytoplasm. The catalysed reaction is tRNA(Ile) + L-isoleucine + ATP = L-isoleucyl-tRNA(Ile) + AMP + diphosphate. Its function is as follows. Catalyzes the attachment of isoleucine to tRNA(Ile). As IleRS can inadvertently accommodate and process structurally similar amino acids such as valine, to avoid such errors it has two additional distinct tRNA(Ile)-dependent editing activities. One activity is designated as 'pretransfer' editing and involves the hydrolysis of activated Val-AMP. The other activity is designated 'posttransfer' editing and involves deacylation of mischarged Val-tRNA(Ile). In Anaplasma marginale (strain St. Maries), this protein is Isoleucine--tRNA ligase.